The primary structure comprises 396 residues: Ornithine aminotransferase 2 (396 aa).

At K255 the chain carries N6-(pyridoxal phosphate)lysine.

It belongs to the class-III pyridoxal-phosphate-dependent aminotransferase family. OAT subfamily. Pyridoxal 5'-phosphate is required as a cofactor.

It localises to the cytoplasm. It carries out the reaction a 2-oxocarboxylate + L-ornithine = L-glutamate 5-semialdehyde + an L-alpha-amino acid. Its pathway is amino-acid biosynthesis; L-proline biosynthesis; L-glutamate 5-semialdehyde from L-ornithine: step 1/1. Catalyzes the interconversion of ornithine to glutamate semialdehyde. In Staphylococcus aureus (strain COL), this protein is Ornithine aminotransferase 2.